The primary structure comprises 110 residues: Large ribosomal subunit protein uL22 (110 aa).

The protein belongs to the universal ribosomal protein uL22 family. In terms of assembly, part of the 50S ribosomal subunit.

Functionally, this protein binds specifically to 23S rRNA; its binding is stimulated by other ribosomal proteins, e.g. L4, L17, and L20. It is important during the early stages of 50S assembly. It makes multiple contacts with different domains of the 23S rRNA in the assembled 50S subunit and ribosome. The globular domain of the protein is located near the polypeptide exit tunnel on the outside of the subunit, while an extended beta-hairpin is found that lines the wall of the exit tunnel in the center of the 70S ribosome. The chain is Large ribosomal subunit protein uL22 from Hahella chejuensis (strain KCTC 2396).